The sequence spans 537 residues: O-phosphoserine--tRNA(Cys) ligase (537 aa).

Substrate-binding positions include 186 to 188 (HMT), 231 to 233 (SAS), 273 to 274 (YY), and N317.

The protein belongs to the class-II aminoacyl-tRNA synthetase family. O-phosphoseryl-tRNA(Cys) synthetase subfamily. In terms of assembly, homotetramer. Interacts with SepCysS.

It catalyses the reaction tRNA(Cys) + O-phospho-L-serine + ATP = O-phospho-L-seryl-tRNA(Cys) + AMP + diphosphate. In terms of biological role, catalyzes the attachment of O-phosphoserine (Sep) to tRNA(Cys). This chain is O-phosphoserine--tRNA(Cys) ligase, found in Methanococcus maripaludis (strain C5 / ATCC BAA-1333).